A 175-amino-acid chain; its full sequence is Chorismate pyruvate-lyase (175 aa).

4 residues coordinate substrate: Met-36, Arg-78, Leu-116, and Glu-157.

It belongs to the UbiC family. As to quaternary structure, monomer.

The protein resides in the cytoplasm. It catalyses the reaction chorismate = 4-hydroxybenzoate + pyruvate. Its pathway is cofactor biosynthesis; ubiquinone biosynthesis. In terms of biological role, removes the pyruvyl group from chorismate, with concomitant aromatization of the ring, to provide 4-hydroxybenzoate (4HB) for the ubiquinone pathway. The polypeptide is Chorismate pyruvate-lyase (Hamiltonella defensa subsp. Acyrthosiphon pisum (strain 5AT)).